A 156-amino-acid chain; its full sequence is Probable cyclic pyranopterin monophosphate synthase (156 aa).

Substrate contacts are provided by residues 73 to 75 (LCH) and 109 to 110 (ME). The active site involves Asp124.

Belongs to the MoaC family. As to quaternary structure, homohexamer; trimer of dimers.

The enzyme catalyses (8S)-3',8-cyclo-7,8-dihydroguanosine 5'-triphosphate = cyclic pyranopterin phosphate + diphosphate. It participates in cofactor biosynthesis; molybdopterin biosynthesis. Catalyzes the conversion of (8S)-3',8-cyclo-7,8-dihydroguanosine 5'-triphosphate to cyclic pyranopterin monophosphate (cPMP). The sequence is that of Probable cyclic pyranopterin monophosphate synthase from Pyrococcus furiosus (strain ATCC 43587 / DSM 3638 / JCM 8422 / Vc1).